We begin with the raw amino-acid sequence, 431 residues long: Glucose-1-phosphate adenylyltransferase (431 aa).

Lysine 39 lines the beta-D-fructose 1,6-bisphosphate pocket. The AMP site is built by arginine 40, histidine 46, and arginine 52. Tyrosine 114 is a binding site for alpha-D-glucose 1-phosphate. Arginine 130 contacts AMP. Alpha-D-glucose 1-phosphate is bound by residues glycine 179, 194–195 (EK), and serine 212. The AMP site is built by glutamate 370 and arginine 386. Beta-D-fructose 1,6-bisphosphate-binding positions include 419 to 423 (REMLR) and 429 to 431 (QER).

This sequence belongs to the bacterial/plant glucose-1-phosphate adenylyltransferase family. In terms of assembly, homotetramer.

The enzyme catalyses alpha-D-glucose 1-phosphate + ATP + H(+) = ADP-alpha-D-glucose + diphosphate. It functions in the pathway glycan biosynthesis; glycogen biosynthesis. Allosterically activated by fructose-1,6-bisphosphate (F16BP) and inhibited by AMP. In terms of biological role, involved in the biosynthesis of ADP-glucose, a building block required for the elongation reactions to produce glycogen. Catalyzes the reaction between ATP and alpha-D-glucose 1-phosphate (G1P) to produce pyrophosphate and ADP-Glc. The sequence is that of Glucose-1-phosphate adenylyltransferase from Salmonella dublin (strain CT_02021853).